The following is a 40-amino-acid chain: Photosystem II reaction center protein J (40 aa).

Residues 8-28 traverse the membrane as a helical segment; sequence IPLWIIGTVAGILVIGLIGIF.

It belongs to the PsbJ family. In terms of assembly, PSII is composed of 1 copy each of membrane proteins PsbA, PsbB, PsbC, PsbD, PsbE, PsbF, PsbH, PsbI, PsbJ, PsbK, PsbL, PsbM, PsbT, PsbX, PsbY, PsbZ, Psb30/Ycf12, at least 3 peripheral proteins of the oxygen-evolving complex and a large number of cofactors. It forms dimeric complexes.

The protein resides in the plastid. Its subcellular location is the chloroplast thylakoid membrane. Its function is as follows. One of the components of the core complex of photosystem II (PSII). PSII is a light-driven water:plastoquinone oxidoreductase that uses light energy to abstract electrons from H(2)O, generating O(2) and a proton gradient subsequently used for ATP formation. It consists of a core antenna complex that captures photons, and an electron transfer chain that converts photonic excitation into a charge separation. The sequence is that of Photosystem II reaction center protein J from Oenothera elata subsp. hookeri (Hooker's evening primrose).